The sequence spans 242 residues: Myogenic factor 6 (242 aa).

Residues 31-63 form a disordered region; sequence SPLYPGSDGTLSPCQDQMPQEAGSDSSGEEHVL. Polar residues predominate over residues 39–56; that stretch reads GTLSPCQDQMPQEAGSDS. One can recognise a bHLH domain in the interval 93 to 144; the sequence is DRRKAATLRERRRLKKINEAFEALKRRTVANPNQRLPKVEILRSAISYIERL.

As to quaternary structure, efficient DNA binding requires dimerization with another bHLH protein. Interacts with CSRP3. Skeletal muscle.

Its subcellular location is the nucleus. Involved in muscle differentiation (myogenic factor). Induces fibroblasts to differentiate into myoblasts. Probable sequence specific DNA-binding protein. The polypeptide is Myogenic factor 6 (Myf6) (Mus musculus (Mouse)).